A 221-amino-acid polypeptide reads, in one-letter code: MPLAKEIPTPYVWSYQPQMGVPAGASQDYSTKINCLSAGPRMAQTVFALRDQRNRVLTAEAHGQTPRPVVNPASWPAAALSHEPPPPTLLTLPRNEPTEHAMTDAGYQIAGGAAPWSGVKTGSFCGRGLQLAEPPTTAIYPSGLFHLGRGQRLVLDHQPARTLLLESAPSVPRYGGIGARQFLKEFTPAVYPQPYSGPPNTFPDYFCFNYDSVSNSVDGYS.

At T65 the chain carries Phosphothreonine; by host. The propeptide occupies 113–150; that stretch reads AAPWSGVKTGSFCGRGLQLAEPPTTAIYPSGLFHLGRG.

This sequence belongs to the adenoviridae hexon-linking protein family. As to quaternary structure, interacts with the peripentonal hexons as well as the hexons in the facets. Part of a complex composed of the core-capsid bridging protein, the endosome lysis protein VI and the hexon-linking protein VIII; these interactions bridge the virus core to the capsid. Cleaved by the viral protease during virion maturation. May cause the middle segment to be shed from the capsid.

It localises to the virion. The protein resides in the host nucleus. Functionally, structural component of the virion that acts as a cement protein on the capsid interior and which glue the peripentonal hexons and group-of-nine hexons together. This is Pre-hexon-linking protein VIII from Sus scrofa (Pig).